A 359-amino-acid polypeptide reads, in one-letter code: Probable dual-specificity RNA methyltransferase RlmN (359 aa).

The active-site Proton acceptor is the Glu91. Positions 97–329 (QHYGHSVCVT…KKNGVNCVVR (233 aa)) constitute a Radical SAM core domain. A disulfide bridge links Cys104 with Cys340. [4Fe-4S] cluster contacts are provided by Cys111, Cys115, and Cys118. Residues 163–164 (GE), Ser195, 218–220 (SLH), and Asn296 each bind S-adenosyl-L-methionine. The active-site S-methylcysteine intermediate is the Cys340.

Belongs to the radical SAM superfamily. RlmN family. Requires [4Fe-4S] cluster as cofactor.

It is found in the cytoplasm. The enzyme catalyses adenosine(2503) in 23S rRNA + 2 reduced [2Fe-2S]-[ferredoxin] + 2 S-adenosyl-L-methionine = 2-methyladenosine(2503) in 23S rRNA + 5'-deoxyadenosine + L-methionine + 2 oxidized [2Fe-2S]-[ferredoxin] + S-adenosyl-L-homocysteine. It carries out the reaction adenosine(37) in tRNA + 2 reduced [2Fe-2S]-[ferredoxin] + 2 S-adenosyl-L-methionine = 2-methyladenosine(37) in tRNA + 5'-deoxyadenosine + L-methionine + 2 oxidized [2Fe-2S]-[ferredoxin] + S-adenosyl-L-homocysteine. Its function is as follows. Specifically methylates position 2 of adenine 2503 in 23S rRNA and position 2 of adenine 37 in tRNAs. The protein is Probable dual-specificity RNA methyltransferase RlmN of Streptococcus pyogenes serotype M2 (strain MGAS10270).